A 160-amino-acid chain; its full sequence is MLRIGNGYDVHKLVEGRKLMLGGVEVPHTKGVLGHSDGDVLLHAITDAIIGALGLGDIGLHFPDNDENLKDIDSAILLKKINNIMKEKNYKIVNLDSIIVMQKPKLRPYIDSIRDNIAKILEINSELINVKAKTEEKLGFTGDETGVKSYCVVLLEKKKC.

Residues D9 and H11 each contribute to the a divalent metal cation site. 4-CDP-2-C-methyl-D-erythritol 2-phosphate-binding positions include 9–11 and 35–36; these read DVH and HS. A divalent metal cation is bound at residue H43. 4-CDP-2-C-methyl-D-erythritol 2-phosphate is bound by residues 57–59, 62–66, and F140; these read DIG and FPDND.

Belongs to the IspF family. Homotrimer. Requires a divalent metal cation as cofactor.

The enzyme catalyses 4-CDP-2-C-methyl-D-erythritol 2-phosphate = 2-C-methyl-D-erythritol 2,4-cyclic diphosphate + CMP. It functions in the pathway isoprenoid biosynthesis; isopentenyl diphosphate biosynthesis via DXP pathway; isopentenyl diphosphate from 1-deoxy-D-xylulose 5-phosphate: step 4/6. Functionally, involved in the biosynthesis of isopentenyl diphosphate (IPP) and dimethylallyl diphosphate (DMAPP), two major building blocks of isoprenoid compounds. Catalyzes the conversion of 4-diphosphocytidyl-2-C-methyl-D-erythritol 2-phosphate (CDP-ME2P) to 2-C-methyl-D-erythritol 2,4-cyclodiphosphate (ME-CPP) with a corresponding release of cytidine 5-monophosphate (CMP). The sequence is that of 2-C-methyl-D-erythritol 2,4-cyclodiphosphate synthase from Fusobacterium nucleatum subsp. nucleatum (strain ATCC 25586 / DSM 15643 / BCRC 10681 / CIP 101130 / JCM 8532 / KCTC 2640 / LMG 13131 / VPI 4355).